The following is a 646-amino-acid chain: Altered inheritance of mitochondria protein 9, mitochondrial (646 aa).

A mitochondrion-targeting transit peptide spans 1–34 (MLRIPSRIGSRQVLACAGRNLKCGSVMRHISRRN).

This sequence belongs to the AIM9 family.

It is found in the mitochondrion. This chain is Altered inheritance of mitochondria protein 9, mitochondrial (AIM9), found in Candida glabrata (strain ATCC 2001 / BCRC 20586 / JCM 3761 / NBRC 0622 / NRRL Y-65 / CBS 138) (Yeast).